Consider the following 333-residue polypeptide: MIERIWSGQSRLYWLLLPLSWLYGLITFLIRQSYRLGWRKSWRSPVPIVVVGNLTAGGNGKTPVVIWLVEQLQRRGYRVGVVSRGYGGKAERYPLLLNESVTTVQAGDEPVLIFQRTGAPVAVAPRRAEAVSALLARHTLDVVITDDGLQHYALARDIELVVIDGMRRFGNGWWLPAGPMRERESRLASVDAVVVNGGVPQTNEIGMTLTAGMAVNLLSGESRSLSQLYDVVAMAGIGHPPRFFATLRDAGVSIAREVAFADHQSYQPEQLALLTQDTMQPLLMTEKDAVKCKAFAQDNWWYLPVDAVLAEPQGTQLLDKLEDMLNRNVGSRT.

55 to 62 is an ATP binding site; the sequence is TAGGNGKT.

This sequence belongs to the LpxK family.

It catalyses the reaction a lipid A disaccharide + ATP = a lipid IVA + ADP + H(+). It participates in glycolipid biosynthesis; lipid IV(A) biosynthesis; lipid IV(A) from (3R)-3-hydroxytetradecanoyl-[acyl-carrier-protein] and UDP-N-acetyl-alpha-D-glucosamine: step 6/6. Its function is as follows. Transfers the gamma-phosphate of ATP to the 4'-position of a tetraacyldisaccharide 1-phosphate intermediate (termed DS-1-P) to form tetraacyldisaccharide 1,4'-bis-phosphate (lipid IVA). The chain is Tetraacyldisaccharide 4'-kinase from Pectobacterium atrosepticum (strain SCRI 1043 / ATCC BAA-672) (Erwinia carotovora subsp. atroseptica).